A 265-amino-acid chain; its full sequence is Mlc titration factor A (265 aa).

Positions 111, 148, 152, and 211 each coordinate Zn(2+).

This sequence belongs to the MtfA family. As to quaternary structure, interacts with Mlc. The cofactor is Zn(2+).

Its subcellular location is the cytoplasm. In terms of biological role, involved in the modulation of the activity of the glucose-phosphotransferase system (glucose-PTS). Interacts with the transcriptional repressor Mlc, preventing its interaction with DNA and leading to the modulation of expression of genes regulated by Mlc, including ptsG, which encodes the PTS system glucose-specific EIICB component. Shows zinc-dependent metallopeptidase activity. This chain is Mlc titration factor A, found in Klebsiella pneumoniae (strain 342).